Here is a 185-residue protein sequence, read N- to C-terminus: MVQRLKAIYLEKAAPRLREMFEYKNVHQIPRIEKIIINCGLGEASQNAKSLDSAMKELSIIAGQKGVITRAKKAIANFKLRKDMPVGISITLRGNSMYAFLDRLINLALPRIKDFQGVSSKGFDGHGNYNLGLKEQLMFPEINFDQIDQIRGMDISIVTTCNTDSEGFYLLETLGMPFKEKFTKN.

Belongs to the universal ribosomal protein uL5 family. Part of the 50S ribosomal subunit; contacts the 5S rRNA.

It is found in the plastid. The protein localises to the chloroplast. Binds 5S rRNA, forms part of the central protuberance of the 50S subunit. This Chlorokybus atmophyticus (Soil alga) protein is Large ribosomal subunit protein uL5c (rpl5).